The chain runs to 303 residues: Aspartate carbamoyltransferase catalytic subunit (303 aa).

Carbamoyl phosphate is bound by residues R54 and T55. Residue K82 coordinates L-aspartate. Carbamoyl phosphate contacts are provided by R104, H132, and Q135. L-aspartate-binding residues include R165 and R221. The carbamoyl phosphate site is built by G261 and P262.

Belongs to the aspartate/ornithine carbamoyltransferase superfamily. ATCase family. As to quaternary structure, heterododecamer (2C3:3R2) of six catalytic PyrB chains organized as two trimers (C3), and six regulatory PyrI chains organized as three dimers (R2).

The catalysed reaction is carbamoyl phosphate + L-aspartate = N-carbamoyl-L-aspartate + phosphate + H(+). It participates in pyrimidine metabolism; UMP biosynthesis via de novo pathway; (S)-dihydroorotate from bicarbonate: step 2/3. Functionally, catalyzes the condensation of carbamoyl phosphate and aspartate to form carbamoyl aspartate and inorganic phosphate, the committed step in the de novo pyrimidine nucleotide biosynthesis pathway. The sequence is that of Aspartate carbamoyltransferase catalytic subunit from Koribacter versatilis (strain Ellin345).